Consider the following 428-residue polypeptide: Elongation factor 1-alpha (428 aa).

One can recognise a tr-type G domain in the interval 5 to 215; it reads KPHVNIVFIG…ALDQIPEPPK (211 aa). Residues 14 to 21 are G1; the sequence is GHVDHGKS. Residue 14-21 participates in GTP binding; sequence GHVDHGKS. Serine 21 contributes to the Mg(2+) binding site. The tract at residues 68–72 is G2; sequence GITID. The segment at 89-92 is G3; sequence DAPG. Residues 89 to 93 and 144 to 147 each bind GTP; these read DAPGH and NKMD. A G4 region spans residues 144–147; that stretch reads NKMD. Residues 181–183 are G5; that stretch reads SAW.

The protein belongs to the TRAFAC class translation factor GTPase superfamily. Classic translation factor GTPase family. EF-Tu/EF-1A subfamily.

It is found in the cytoplasm. It catalyses the reaction GTP + H2O = GDP + phosphate + H(+). GTP hydrolase that promotes the GTP-dependent binding of aminoacyl-tRNA to the A-site of ribosomes during protein biosynthesis. The polypeptide is Elongation factor 1-alpha (Thermococcus kodakarensis (strain ATCC BAA-918 / JCM 12380 / KOD1) (Pyrococcus kodakaraensis (strain KOD1))).